A 400-amino-acid polypeptide reads, in one-letter code: Malonyl CoA-acyl carrier protein transacylase (400 aa).

Active-site residues include Ser-92 and His-201.

It belongs to the FabD family.

It carries out the reaction holo-[ACP] + malonyl-CoA = malonyl-[ACP] + CoA. In terms of biological role, is involved in the mycosubtilin synthetase assembly, by catalyzing the transfer of malonyl groups to a specific acyl-carrier-protein domain on MycA. The chain is Malonyl CoA-acyl carrier protein transacylase (fenF) from Bacillus subtilis.